The primary structure comprises 491 residues: Transmembrane protein 39B (491 aa).

The disordered stretch occupies residues 1–56 (MAGGRRGANRTTYCRSPLSNDTGSVGNGNHSTSSPVTGVRSRTRNGSGTGMSSPPL). Residues Asn9, Asn20, Asn29, and Asn45 are each glycosylated (N-linked (GlcNAc...) asparagine). Polar residues-rich tracts occupy residues 9 to 36 (NRTTYCRSPLSNDTGSVGNGNHSTSSPV) and 44 to 56 (RNGSGTGMSSPPL). A run of 8 helical transmembrane segments spans residues 79-99 (LFELHLFACHLIALFVHYVNI), 115-135 (TSLNFHLIDYNMLVFTVIVLA), 152-172 (LSFPHSVFLVTARFAVLTLAG), 185-205 (TYSVLSLLFLCYPFGMYIPFF), 290-310 (EVLVSSMLSAYYVAFVPVWFV), 322-342 (CELFILVSVSTSVILMRHLLP), 423-443 (ILNILIILEGAMIFYQLYSLM), and 449-469 (HQTISLALILFSNYYAFFKLL).

It belongs to the TMEM39 family. As to expression, expressed in the ovary, followed by the intestine and brain.

Its subcellular location is the endoplasmic reticulum membrane. In terms of biological role, may protect the cells against DNA damage caused by exposure to the cold-warming stress and facilitates tissue damage repair during the recovery phase. The polypeptide is Transmembrane protein 39B (Danio rerio (Zebrafish)).